The following is a 213-amino-acid chain: FMN-dependent NADH:quinone oxidoreductase (213 aa).

S10 lines the FMN pocket.

Belongs to the azoreductase type 1 family. Homodimer. The cofactor is FMN.

The catalysed reaction is 2 a quinone + NADH + H(+) = 2 a 1,4-benzosemiquinone + NAD(+). The enzyme catalyses N,N-dimethyl-1,4-phenylenediamine + anthranilate + 2 NAD(+) = 2-(4-dimethylaminophenyl)diazenylbenzoate + 2 NADH + 2 H(+). Quinone reductase that provides resistance to thiol-specific stress caused by electrophilic quinones. Functionally, also exhibits azoreductase activity. Catalyzes the reductive cleavage of the azo bond in aromatic azo compounds to the corresponding amines. In Opitutus terrae (strain DSM 11246 / JCM 15787 / PB90-1), this protein is FMN-dependent NADH:quinone oxidoreductase.